The primary structure comprises 357 residues: MPKPRLLIAASGTGGHIFPALAVAGELSEFEIAWLGVPDRLENKLVPGRYPLHTVALQGLNRKPGPQWLEAASQTFAAYRYARNLLSQERFAGVFTTGGYIAAPAVLAARSLNLPAIGHESNVLPGKVIRYLARWMRSLGLGFAESATYVSGATTRWVGTPVRPEFLISPNPLLDVPVPPEAPLIVVMGGSQGARAINQMVGECAPGWLERGWWIVHLTGAGEYDAVREGTPDHPAYRIYAFWEKMAPLLSRADLAISRAGAATLSELLVTGTPSLLIPYPFAAEDHQSVNAAALVRAGAALQFSQAALSAPLLDRTVQALLDNPETLARMAASARRLAVPDAARRTADLVRECVRH.

UDP-N-acetyl-alpha-D-glucosamine is bound by residues 13-15 (TGG), asparagine 122, arginine 163, serine 191, and glutamine 288.

The protein belongs to the glycosyltransferase 28 family. MurG subfamily.

It localises to the cell inner membrane. It catalyses the reaction di-trans,octa-cis-undecaprenyl diphospho-N-acetyl-alpha-D-muramoyl-L-alanyl-D-glutamyl-meso-2,6-diaminopimeloyl-D-alanyl-D-alanine + UDP-N-acetyl-alpha-D-glucosamine = di-trans,octa-cis-undecaprenyl diphospho-[N-acetyl-alpha-D-glucosaminyl-(1-&gt;4)]-N-acetyl-alpha-D-muramoyl-L-alanyl-D-glutamyl-meso-2,6-diaminopimeloyl-D-alanyl-D-alanine + UDP + H(+). The protein operates within cell wall biogenesis; peptidoglycan biosynthesis. In terms of biological role, cell wall formation. Catalyzes the transfer of a GlcNAc subunit on undecaprenyl-pyrophosphoryl-MurNAc-pentapeptide (lipid intermediate I) to form undecaprenyl-pyrophosphoryl-MurNAc-(pentapeptide)GlcNAc (lipid intermediate II). This Gloeobacter violaceus (strain ATCC 29082 / PCC 7421) protein is UDP-N-acetylglucosamine--N-acetylmuramyl-(pentapeptide) pyrophosphoryl-undecaprenol N-acetylglucosamine transferase.